The sequence spans 480 residues: UDP-glucose 6-dehydrogenase 4 (480 aa).

NAD(+) contacts are provided by residues K3–I20, D33, R38, T90, T128, and E161. Residues E157–E161, K216, K216–L223, R256–G269, and G269 contribute to the substrate site. The active-site Nucleophile is C272. K275 lines the NAD(+) pocket. Residues F334 and K335 each coordinate substrate. R342 lines the NAD(+) pocket. R447 is a substrate binding site.

This sequence belongs to the UDP-glucose/GDP-mannose dehydrogenase family.

The catalysed reaction is UDP-alpha-D-glucose + 2 NAD(+) + H2O = UDP-alpha-D-glucuronate + 2 NADH + 3 H(+). It participates in nucleotide-sugar biosynthesis; UDP-alpha-D-glucuronate biosynthesis; UDP-alpha-D-glucuronate from UDP-alpha-D-glucose: step 1/1. Inhibited by UDP-xylose. Its function is as follows. Involved in the biosynthesis of UDP-glucuronic acid (UDP-GlcA), providing nucleotide sugars for cell-wall polymers. This Arabidopsis thaliana (Mouse-ear cress) protein is UDP-glucose 6-dehydrogenase 4.